A 210-amino-acid polypeptide reads, in one-letter code: Lysine N-acyltransferase MbtK (210 aa).

His-130 is a substrate binding site. Asp-168 functions as the Proton acceptor in the catalytic mechanism.

Belongs to the lysine N-acyltransferase MbtK family. Monomer.

It functions in the pathway siderophore biosynthesis; mycobactin biosynthesis. In terms of biological role, acyltransferase required for the direct transfer of medium- to long-chain fatty acyl moieties from a carrier protein (MbtL) on to the epsilon-amino group of lysine residue in the mycobactin core. The protein is Lysine N-acyltransferase MbtK (mbtK) of Mycobacterium tuberculosis (strain CDC 1551 / Oshkosh).